The chain runs to 297 residues: Protoheme IX farnesyltransferase (297 aa).

9 helical membrane-spanning segments follow: residues 23-43, 49-69, 90-110, 117-137, 144-164, 171-191, 215-235, 238-258, and 277-297; these read VTQL…PGLP, VFGT…NCLI, ISAA…MLVL, LTMW…TVIL, NIVI…AAVA, AWVL…ALAL, RLHI…PYII, SGLL…AYAW, and ILYL…GLLA.

It belongs to the UbiA prenyltransferase family. Protoheme IX farnesyltransferase subfamily.

The protein localises to the cell inner membrane. It catalyses the reaction heme b + (2E,6E)-farnesyl diphosphate + H2O = Fe(II)-heme o + diphosphate. The protein operates within porphyrin-containing compound metabolism; heme O biosynthesis; heme O from protoheme: step 1/1. In terms of biological role, converts heme B (protoheme IX) to heme O by substitution of the vinyl group on carbon 2 of heme B porphyrin ring with a hydroxyethyl farnesyl side group. In Bordetella petrii (strain ATCC BAA-461 / DSM 12804 / CCUG 43448), this protein is Protoheme IX farnesyltransferase.